The primary structure comprises 346 residues: 2-oxoglutarate synthase subunit KorA (346 aa).

In terms of assembly, heterotetramer of the KorA, KorB, KorC and KorD subunits.

The catalysed reaction is 2 oxidized [2Fe-2S]-[ferredoxin] + 2-oxoglutarate + CoA = succinyl-CoA + 2 reduced [2Fe-2S]-[ferredoxin] + CO2 + H(+). This chain is 2-oxoglutarate synthase subunit KorA (korA), found in Archaeoglobus fulgidus (strain ATCC 49558 / DSM 4304 / JCM 9628 / NBRC 100126 / VC-16).